We begin with the raw amino-acid sequence, 222 residues long: Superoxide dismutase [Mn], mitochondrial (222 aa).

The N-terminal 24 residues, 1–24 (MLCRAACSTGRRLGPVAGAAGSRH), are a transit peptide targeting the mitochondrion. H50 lines the Mn(2+) pocket. 3'-nitrotyrosine is present on Y58. An N6-acetyllysine; alternate mark is found at K68 and K75. Residues K68 and K75 each carry the N6-succinyllysine; alternate modification. H98 serves as a coordination point for Mn(2+). N6-acetyllysine is present on K114. An N6-acetyllysine; alternate mark is found at K122 and K130. An N6-succinyllysine; alternate mark is found at K122 and K130. D183 and H187 together coordinate Mn(2+). K202 is modified (N6-acetyllysine).

The protein belongs to the iron/manganese superoxide dismutase family. Homotetramer. It depends on Mn(2+) as a cofactor. Nitrated under oxidative stress. Nitration coupled with oxidation inhibits the catalytic activity. Post-translationally, acetylation at Lys-122 decreases enzymatic activity. Deacetylated by SIRT3 upon exposure to ionizing radiations or after long fasting. In terms of processing, polyubiquitinated; leading to proteasomal degradation. Deubiquitinated by USP36 which increases protein stability.

The protein resides in the mitochondrion matrix. It catalyses the reaction 2 superoxide + 2 H(+) = H2O2 + O2. Its function is as follows. Destroys superoxide anion radicals which are normally produced within the cells and which are toxic to biological systems. This Mus musculus (Mouse) protein is Superoxide dismutase [Mn], mitochondrial (Sod2).